A 480-amino-acid polypeptide reads, in one-letter code: MVKICCIGAGYVGGPTMAVIALKCPSVEVAVVDISVPRINAWNSDQLPIYEPGLDDVVKQCRGKNLFFSTDVEKHVREADIVFVSVNTPTKTRGLGAGKAADLTYWESAARMIADVSVSDKIVVEKSTVPVKTAEAIEKILTHNSKGIKFQILSNPEFLAEGTAIEDLFMPDRVLIGGRETTEGFAAVKALKDIYAQWVPEERILTTNLWSAELSKLAANAFLAQRISSVNAMSALCEATGANVSEVSYAVGKDSRIGPKFLNSSVGFGGSCFQKDILNLVYICECNGLPEVAEYWKQVIKINDYQKTRFVNRIVSSMFNTVSNKKIAVLGFAFKKDTGDTRETPAIDVCKGLLGDKARLSIYDPQVTEEQIQRDLTMNKFDWDHPLHLQPMSPTTVKQVSVAWDAYTATKDAHGICILTEWDEFKKLDFQRIFENMQKPAFVFDGRNVVDADKLREIGFIVYSIGKPLDQWLKDMPALA.

NAD(+) contacts are provided by residues 8–13, D33, R38, 86–90, 127–128, and E161; these read GAGYVG, VNTPT, and ST. Substrate is bound by residues 157-161, 216-223, and 256-269; these read EFLAE, KLAANAFL, and RIGPKFLNSSVGFG. The Nucleophile role is filled by C272. 272–275 is an NAD(+) binding site; that stretch reads CFQK. Substrate is bound at residue 334–335; it reads FK. Residue R342 coordinates NAD(+). R447 lines the substrate pocket.

This sequence belongs to the UDP-glucose/GDP-mannose dehydrogenase family.

The catalysed reaction is UDP-alpha-D-glucose + 2 NAD(+) + H2O = UDP-alpha-D-glucuronate + 2 NADH + 3 H(+). The protein operates within nucleotide-sugar biosynthesis; UDP-alpha-D-glucuronate biosynthesis; UDP-alpha-D-glucuronate from UDP-alpha-D-glucose: step 1/1. Its activity is regulated as follows. Inhibited by UDP-xylose. Involved in the biosynthesis of UDP-glucuronic acid (UDP-GlcA), providing nucleotide sugars for cell-wall polymers. Required for the formation of cell wall ingrowths on the outer cell walls of nematode-induced syncytia. The chain is UDP-glucose 6-dehydrogenase 3 (UGD3) from Arabidopsis thaliana (Mouse-ear cress).